The primary structure comprises 367 residues: MNVLIKKFYHLVVRILSKMITPQVIDKPHIVFMMTFPEDIKPIIKALNNSSYQKTVLTTPKQAPYLSELSDDVDVIEMTNRTLVKQIKALKSAQMIIIDNYYLLLGGYNKTSNQHIVQTWHASGALKNFGLTDHQVDVSDKAMVQQYRKVYQATDFYLVGCEQMSQCFKQSLGATEEQMLYFGLPRINKYYTADRATVKAELKDKYGITNKLVLYVPTYREDKADNRAIDKAYFEKCLPGYTLINKLHPSIEDSDIDDVSSIDTSTLMLMSDIIISDYSSLPIEASLLDIPTIFYVYDEGTYDQVRGLNQFYKAIPDSYKVYTEEDLIMTIQEKEHLLSPLFKDWHKYNTDKSLHQLTEYIDKMVTK.

Belongs to the CDP-glycerol glycerophosphotransferase family.

It localises to the cell membrane. The enzyme catalyses N-acetyl-beta-D-mannosaminyl-(1-&gt;4)-N-acetyl-alpha-D-glucosaminyl di-trans,octa-cis-undecaprenyl diphosphate + CDP-glycerol = 4-O-[(2R)-glycerylphospho]-N-acetyl-beta-D-mannosaminyl-(1-&gt;4)-N-acetyl-alpha-D-glucosaminyl di-trans,octa-cis-undecaprenyl diphosphate + CMP + H(+). Its pathway is cell wall biogenesis; poly(ribitol phosphate) teichoic acid biosynthesis. Functionally, catalyzes the addition of a single glycerol phosphate residue to the prenoldiphosphate-linked disaccharide. This chain is Teichoic acid glycerol-phosphate primase (tarB), found in Staphylococcus aureus (strain NCTC 8325 / PS 47).